The following is a 234-amino-acid chain: Endonuclease NucS (234 aa).

It belongs to the NucS endonuclease family.

The protein resides in the cytoplasm. Cleaves both 3' and 5' ssDNA extremities of branched DNA structures. The polypeptide is Endonuclease NucS (Bifidobacterium animalis subsp. lactis (strain AD011)).